Here is an 83-residue protein sequence, read N- to C-terminus: Arminin 3a (83 aa).

Positions 1–18 are cleaved as a signal peptide; it reads MKTVFAILFLTFIALTCA. Positions 19–57 are excised as a propeptide; it reads RNYEDLKEKIKNEVEREIFEDLEEESDELENNFKKFNDA. An Alanine amide modification is found at alanine 80.

The protein belongs to the arminin family. Expressed in entodermal epithelium along the body column.

It is found in the secreted. It localises to the target cell membrane. In terms of biological role, antimicrobial peptide with a broad-spectrum antimicrobial activity. Keeps its antibacterial activity under a wide range of salt concentrations that mimic physiological conditions of human blood, which is surprising, since Hydra is an obligate freshwater animal with nearly no salt tolerance. Does not affect red blood cells. This is Arminin 3a from Hydra vulgaris (Hydra).